We begin with the raw amino-acid sequence, 455 residues long: Ribulose bisphosphate carboxylase large chain (455 aa).

Lysine 5 carries the post-translational modification N6,N6,N6-trimethyllysine. The substrate site is built by asparagine 114 and threonine 164. The active-site Proton acceptor is the lysine 166. Lysine 168 lines the substrate pocket. Lysine 192, aspartate 194, and glutamate 195 together coordinate Mg(2+). An N6-carboxylysine modification is found at lysine 192. The active-site Proton acceptor is histidine 285. Substrate contacts are provided by arginine 286, histidine 318, and serine 370.

It belongs to the RuBisCO large chain family. Type I subfamily. As to quaternary structure, heterohexadecamer of 8 large chains and 8 small chains. Requires Mg(2+) as cofactor.

It is found in the plastid. It localises to the chloroplast. The catalysed reaction is 2 (2R)-3-phosphoglycerate + 2 H(+) = D-ribulose 1,5-bisphosphate + CO2 + H2O. It catalyses the reaction D-ribulose 1,5-bisphosphate + O2 = 2-phosphoglycolate + (2R)-3-phosphoglycerate + 2 H(+). In terms of biological role, ruBisCO catalyzes two reactions: the carboxylation of D-ribulose 1,5-bisphosphate, the primary event in carbon dioxide fixation, as well as the oxidative fragmentation of the pentose substrate in the photorespiration process. Both reactions occur simultaneously and in competition at the same active site. The chain is Ribulose bisphosphate carboxylase large chain from Tamarindus indica (Tamarind).